We begin with the raw amino-acid sequence, 513 residues long: Meiotic sister chromatid recombination protein 1 (513 aa).

Phosphothreonine is present on T237. At S243 the chain carries Phosphoserine.

The protein is Meiotic sister chromatid recombination protein 1 (MSC1) of Saccharomyces cerevisiae (strain ATCC 204508 / S288c) (Baker's yeast).